The chain runs to 545 residues: CTP synthase (545 aa).

An amidoligase domain region spans residues 1–266 (MTTRYIFVTG…DELVVKRFGI (266 aa)). Ser-14 provides a ligand contact to CTP. Ser-14 provides a ligand contact to UTP. ATP-binding positions include 15–20 (SLGKGI) and Asp-72. Mg(2+) is bound by residues Asp-72 and Glu-140. CTP contacts are provided by residues 147–149 (DIE), 187–192 (KTKPTQ), and Lys-223. UTP contacts are provided by residues 187-192 (KTKPTQ) and Lys-223. 239–241 (KDV) contacts ATP. Residues 291-542 (TIGMVGKYIE…VAAATAYQKR (252 aa)) form the Glutamine amidotransferase type-1 domain. Gly-352 serves as a coordination point for L-glutamine. Residue Cys-379 is the Nucleophile; for glutamine hydrolysis of the active site. L-glutamine is bound by residues 380–383 (LGLQ), Glu-403, and Arg-470. Catalysis depends on residues His-515 and Glu-517.

Belongs to the CTP synthase family. Homotetramer.

The enzyme catalyses UTP + L-glutamine + ATP + H2O = CTP + L-glutamate + ADP + phosphate + 2 H(+). It carries out the reaction L-glutamine + H2O = L-glutamate + NH4(+). It catalyses the reaction UTP + NH4(+) + ATP = CTP + ADP + phosphate + 2 H(+). It functions in the pathway pyrimidine metabolism; CTP biosynthesis via de novo pathway; CTP from UDP: step 2/2. With respect to regulation, allosterically activated by GTP, when glutamine is the substrate; GTP has no effect on the reaction when ammonia is the substrate. The allosteric effector GTP functions by stabilizing the protein conformation that binds the tetrahedral intermediate(s) formed during glutamine hydrolysis. Inhibited by the product CTP, via allosteric rather than competitive inhibition. In terms of biological role, catalyzes the ATP-dependent amination of UTP to CTP with either L-glutamine or ammonia as the source of nitrogen. Regulates intracellular CTP levels through interactions with the four ribonucleotide triphosphates. The sequence is that of CTP synthase from Shewanella sediminis (strain HAW-EB3).